The chain runs to 393 residues: 2-nitroimidazole transporter (393 aa).

The Cytoplasmic segment spans residues 1-12; sequence MTCSTSLSGKNR. Residues 13 to 33 traverse the membrane as a helical segment; sequence IVLIAGILMIATTLRVTFTGA. Residues 34 to 52 are Periplasmic-facing; it reads APLLDTIRSAYSLTTAQTG. Residues 53–73 traverse the membrane as a helical segment; the sequence is LLTTLPLLAFALISPLAAPVA. Residues 74 to 80 are Cytoplasmic-facing; that stretch reads RRFGMER. 2 helical membrane-spanning segments follow: residues 81-101 and 102-122; these read SLFA…LPSP and YLLF…NVLL. Residues 123 to 140 are Cytoplasmic-facing; the sequence is PGLIKRDFPHSVARLTGA. Residues 141-161 traverse the membrane as a helical segment; it reads YSLTMGAAAALGSAMVVPLAL. The Periplasmic portion of the chain corresponds to 162–163; it reads NG. Residues 164–184 traverse the membrane as a helical segment; the sequence is FGWQGALLMLMCFPLLALFLW. At 185-218 the chain is on the cytoplasmic side; sequence LPQWRSQQHANLSTSRALHTRGIWRSPLAWQVTL. Residues 219 to 239 traverse the membrane as a helical segment; that stretch reads FLGINSLVYYVIIGWLPAILI. The Periplasmic segment spans residues 240–249; it reads SHGYSEAQAG. The helical transmembrane segment at 250–270 threads the bilayer; the sequence is SLHGLLQLATAAPGLLIPLFL. The Cytoplasmic portion of the chain corresponds to 271–278; it reads HHVKDQRG. A helical transmembrane segment spans residues 279–299; sequence IAAFVALMCAVGAVGLCFMPA. The Periplasmic segment spans residues 300–304; that stretch reads HAITW. The chain crosses the membrane as a helical span at residues 305–325; it reads TLLFGFGSGATMILGLTFIGL. Residues 326–334 lie on the Cytoplasmic side of the membrane; the sequence is RASSAHQAA. Residues 335 to 355 form a helical membrane-spanning segment; the sequence is ALSGMAQSVGYLLAACGPPLM. Over 356–366 the chain is Periplasmic; it reads GKIHDANGNWS. Residues 367-387 traverse the membrane as a helical segment; the sequence is VPLMGVAILSLLMAIFGLCAG. Residues 388-393 are Cytoplasmic-facing; that stretch reads RDKEIR.

It belongs to the major facilitator superfamily. Cyanate porter (TC 2.A.1.17) family.

It localises to the cell inner membrane. In terms of biological role, involved in efflux of 2-nitroimidazole. This Escherichia coli (strain K12) protein is 2-nitroimidazole transporter.